The sequence spans 2156 residues: Oxygen-regulated protein 1 (2156 aa).

The span at 1–19 shows a compositional bias: polar residues; sequence MSDTPSTGFSIIHPTSSEG. Positions 1–25 are disordered; that stretch reads MSDTPSTGFSIIHPTSSEGQVPPPR. 2 Doublecortin domains span residues 36–118 and 154–233; these read KRIS…VDLD and RSLV…GNYD. Disordered stretches follow at residues 353-375, 666-686, 1438-1458, and 1590-1621; these read VSKTGPSNNDEKSEMSFPGRTES, SSVASKKKKKSRQQAINSRYQ, DMEEPRTSEEPGSITNSMTSS, and DWSDYRPDSDSEQPYKTSSDDPNDSGELTQEK.

Interacts (via the doublecortin domains) with microtubules. Interacts with RP1L1. Interacts with MAK. As to expression, expressed in retina. Not expressed in heart, brain, placenta, lung, liver, skeletal muscle, kidney, spleen and pancreas.

The protein resides in the cytoplasm. Its subcellular location is the cytoskeleton. The protein localises to the cilium axoneme. It is found in the cell projection. It localises to the cilium. The protein resides in the photoreceptor outer segment. In terms of biological role, microtubule-associated protein regulating the stability and length of the microtubule-based axoneme of photoreceptors. Required for the differentiation of photoreceptor cells, it plays a role in the organization of the outer segment of rod and cone photoreceptors ensuring the correct orientation and higher-order stacking of outer segment disks along the photoreceptor axoneme. The protein is Oxygen-regulated protein 1 (RP1) of Homo sapiens (Human).